Here is a 205-residue protein sequence, read N- to C-terminus: Thymidine kinase (205 aa).

ATP contacts are provided by residues 9–16 (SAMNAGKS) and 87–90 (DECQ). Residue Glu-88 is the Proton acceptor of the active site. Zn(2+) contacts are provided by Cys-145, Cys-147, Cys-182, and His-185.

It belongs to the thymidine kinase family. As to quaternary structure, homotetramer.

It is found in the cytoplasm. It carries out the reaction thymidine + ATP = dTMP + ADP + H(+). Its activity is regulated as follows. Allosteric enzyme which is feedback inhibited by dTTP and activated by a number of dNDP and dNTP. Functionally, phosphorylates both thymidine and deoxyuridine. The protein is Thymidine kinase of Escherichia coli (strain K12).